A 605-amino-acid polypeptide reads, in one-letter code: MSTMFLRTLREDPADADVVSDKLLQRACYLRKAAPGIWTWLPLGLNVLNKIENIIREEMASIDAQEVHFSGLLPREPYEATHRWEEYGDNIFRLKDRHEADYLLAPTHEEMFTLLVKDLYSSYKDLPVTLYQIQTKYRDEFRPRAGLIRGREFIMKDAYSFTLDKEGLVKAYMDERGAYERIFNRLDLKYVPVHAMAGPMGGFESEEFLAPMEIGEDTFAQSPSGKAWNVEALTTPEPEAIDFTATPAAEKRPTPDAATIDKMVEFANANHPRSDGRDWQASDILKNVVIAVMHPQDEDHDEPWRELVVVGVPGDRTVDMKRLEAQFTPAEIEEATDEDLKKHPELVKGYIGPMALGPQARDGKKAENASETGDALRYLIDAHVARGSAWFTGADEQDVDYYDLVYGRDFEADGTVEAVQVRHGDMSPDGSGPLSFERGVEIGQVFQLGLKYSNALGLKVLDQNGKTVPVWMGSYGIGVSRVMACIAETHHDEKGLAWPAVIAPAQVHVVATGKDAAAFEAAEQLIGELEAKGIEVIFDDRKKVSPGVKFKDAELIGVPIIAVAGRDTVNNGTIEVRDRNGENAEAVPVADAAQAIADRVAALLK.

Belongs to the class-II aminoacyl-tRNA synthetase family. ProS type 1 subfamily. Homodimer.

It is found in the cytoplasm. The enzyme catalyses tRNA(Pro) + L-proline + ATP = L-prolyl-tRNA(Pro) + AMP + diphosphate. In terms of biological role, catalyzes the attachment of proline to tRNA(Pro) in a two-step reaction: proline is first activated by ATP to form Pro-AMP and then transferred to the acceptor end of tRNA(Pro). As ProRS can inadvertently accommodate and process non-cognate amino acids such as alanine and cysteine, to avoid such errors it has two additional distinct editing activities against alanine. One activity is designated as 'pretransfer' editing and involves the tRNA(Pro)-independent hydrolysis of activated Ala-AMP. The other activity is designated 'posttransfer' editing and involves deacylation of mischarged Ala-tRNA(Pro). The misacylated Cys-tRNA(Pro) is not edited by ProRS. This Bifidobacterium adolescentis (strain ATCC 15703 / DSM 20083 / NCTC 11814 / E194a) protein is Proline--tRNA ligase.